The chain runs to 508 residues: Tyrosine decarboxylase 4 (508 aa).

At Lys-318 the chain carries N6-(pyridoxal phosphate)lysine.

Belongs to the group II decarboxylase family. In terms of assembly, homodimer. The cofactor is pyridoxal 5'-phosphate.

It catalyses the reaction L-tyrosine + H(+) = tyramine + CO2. This is Tyrosine decarboxylase 4 (TYRDC-4) from Petroselinum crispum (Parsley).